Consider the following 178-residue polypeptide: Ribosome maturation factor RimM (178 aa).

The PRC barrel domain occupies 101–178; that stretch reads TDEYYWYQLV…VMRVEWDADF (78 aa).

It belongs to the RimM family. As to quaternary structure, binds ribosomal protein uS19.

It is found in the cytoplasm. Its function is as follows. An accessory protein needed during the final step in the assembly of 30S ribosomal subunit, possibly for assembly of the head region. Essential for efficient processing of 16S rRNA. May be needed both before and after RbfA during the maturation of 16S rRNA. It has affinity for free ribosomal 30S subunits but not for 70S ribosomes. The polypeptide is Ribosome maturation factor RimM (Pseudomonas entomophila (strain L48)).